The sequence spans 517 residues: GMP synthase [glutamine-hydrolyzing] (517 aa).

The region spanning 11–202 (KIIVLDYGSQ…AFDICKAEAN (192 aa)) is the Glutamine amidotransferase type-1 domain. Cysteine 88 acts as the Nucleophile in catalysis. Active-site residues include histidine 176 and glutamate 178. A GMPS ATP-PPase domain is found at 203–392 (WSMDDFITKQ…LGMPHALVWR (190 aa)). 230-236 (SGGVDSS) serves as a coordination point for ATP.

Homodimer.

It carries out the reaction XMP + L-glutamine + ATP + H2O = GMP + L-glutamate + AMP + diphosphate + 2 H(+). It participates in purine metabolism; GMP biosynthesis; GMP from XMP (L-Gln route): step 1/1. In terms of biological role, catalyzes the synthesis of GMP from XMP. In Lacticaseibacillus casei (strain BL23) (Lactobacillus casei), this protein is GMP synthase [glutamine-hydrolyzing].